Consider the following 136-residue polypeptide: Heavy metal-associated isoprenylated plant protein 19 (136 aa).

Positions 13-77 (YMDVEFNVSM…LKKKTGKRVK (65 aa)) constitute an HMA domain. A metal cation is bound by residues Cys24 and Cys27. Cys133 carries the cysteine methyl ester modification. The S-farnesyl cysteine moiety is linked to residue Cys133. The propeptide at 134–136 (SIS) is removed in mature form.

This sequence belongs to the HIPP family.

Its function is as follows. Heavy-metal-binding protein. The chain is Heavy metal-associated isoprenylated plant protein 19 from Arabidopsis thaliana (Mouse-ear cress).